The primary structure comprises 130 residues: Small ribosomal subunit protein uS9 (130 aa).

Positions arginine 109–arginine 130 are disordered. Basic residues predominate over residues lysine 111 to arginine 130.

The protein belongs to the universal ribosomal protein uS9 family.

The polypeptide is Small ribosomal subunit protein uS9 (Mycoplasma mobile (strain ATCC 43663 / 163K / NCTC 11711) (Mesomycoplasma mobile)).